Consider the following 437-residue polypeptide: GTPase Obg (437 aa).

The 159-residue stretch at 2–160 (SMFLDTAKIK…RNLELELKVL (159 aa)) folds into the Obg domain. In terms of domain architecture, OBG-type G spans 161–338 (ADVGLVGFPS…LLEATAELLE (178 aa)). Residues 167–174 (GFPSVGKS), 192–196 (FTTIV), 214–217 (DLPG), 284–287 (NKMD), and 319–321 (SGI) each bind GTP. Ser-174 and Thr-194 together coordinate Mg(2+). Residues 359 to 437 (GFNPDEPEFA…IGKFEFEFVD (79 aa)) enclose the OCT domain.

This sequence belongs to the TRAFAC class OBG-HflX-like GTPase superfamily. OBG GTPase family. As to quaternary structure, monomer. Requires Mg(2+) as cofactor.

Its subcellular location is the cytoplasm. An essential GTPase which binds GTP, GDP and possibly (p)ppGpp with moderate affinity, with high nucleotide exchange rates and a fairly low GTP hydrolysis rate. Plays a role in control of the cell cycle, stress response, ribosome biogenesis and in those bacteria that undergo differentiation, in morphogenesis control. This is GTPase Obg from Streptococcus suis (strain 98HAH33).